The chain runs to 309 residues: MSRTILQPGQIEAAANIPPHLHQPSRDLFARRGERLLQLAEGHPMGDYLRLVAGLCRLQQALLDNPPALAPLDPERLRKSREHGMPPLAYDLLVREGAWLPWLDALLAGYPAPANAAVGAALEQLREAEEGQRKAWAIALLSGQFDLLPAALVPFLGAALQVAWSHWLLGLEEGAVVETESRTLCPACGSPPMAGMIRQGGKETGLRYLSCSLCACEWHYVRIKCSHCEESKHLAYLSLEHDGQPAEKAVLRAETCPSCQGYLKQFYLEFDRHADALADDLASLALDMRLAEDGYLRRSPNLLLAPGGE.

The protein belongs to the FdhE family.

It is found in the cytoplasm. In terms of biological role, necessary for formate dehydrogenase activity. This is Protein FdhE homolog from Pseudomonas aeruginosa (strain ATCC 15692 / DSM 22644 / CIP 104116 / JCM 14847 / LMG 12228 / 1C / PRS 101 / PAO1).